Reading from the N-terminus, the 395-residue chain is Protein RIF2 (395 aa).

Interacts with RIF1 and RAP1 C-terminus.

The protein localises to the nucleus. The protein resides in the chromosome. It localises to the telomere. Functionally, involved in transcriptional silencing and telomere length regulation. Its role in telomere length regulation results from either a block in elongation or promoting degradation of the telomere ends. Loss of RIF1 function results in derepression of an HMR silencer, whose ARS consensus element has been deleted, and in the elongation of telomeres. RAP1 may target the binding of RIF1 to silencers and telomeres. The chain is Protein RIF2 (RIF2) from Saccharomyces cerevisiae (strain ATCC 204508 / S288c) (Baker's yeast).